Here is a 240-residue protein sequence, read N- to C-terminus: Orotidine 5'-phosphate decarboxylase (240 aa).

Substrate is bound by residues Asp10, Lys32, 59 to 68 (DLKLHDIPNT), Thr122, Arg183, Gln192, Gly212, and Arg213. The Proton donor role is filled by Lys61.

This sequence belongs to the OMP decarboxylase family. Type 1 subfamily. As to quaternary structure, homodimer.

It carries out the reaction orotidine 5'-phosphate + H(+) = UMP + CO2. Its pathway is pyrimidine metabolism; UMP biosynthesis via de novo pathway; UMP from orotate: step 2/2. In terms of biological role, catalyzes the decarboxylation of orotidine 5'-monophosphate (OMP) to uridine 5'-monophosphate (UMP). The protein is Orotidine 5'-phosphate decarboxylase of Carboxydothermus hydrogenoformans (strain ATCC BAA-161 / DSM 6008 / Z-2901).